We begin with the raw amino-acid sequence, 90 residues long: U7-theraphotoxin-Hhn1a 7 (90 aa).

The first 19 residues, 1–19, serve as a signal peptide directing secretion; it reads MKTAIFTVVLALAVFAVLS. The propeptide occupies 20–50; it reads FGWEANEKALSEGFTELIHEKEAASETEARE. 3 disulfides stabilise this stretch: Cys51/Cys65, Cys58/Cys70, and Cys64/Cys81.

The protein belongs to the neurotoxin 10 (Hwtx-1) family. 13 (Hntx-13) subfamily. As to expression, expressed by the venom gland.

It is found in the secreted. In terms of biological role, ion channel inhibitor. The chain is U7-theraphotoxin-Hhn1a 7 from Cyriopagopus hainanus (Chinese bird spider).